The following is a 398-amino-acid chain: Small ribosomal subunit protein mS29 (398 aa).

A mitochondrion-targeting transit peptide spans Met1–Phe21. The tract at residues Gln39–His67 is disordered. Basic and acidic residues predominate over residues Asn52–Gln66. GTP contacts are provided by residues Met100 and Gly128 to Thr135. N6-acetyllysine occurs at positions 175 and 207.

The protein belongs to the mitochondrion-specific ribosomal protein mS29 family. In terms of assembly, component of the mitochondrial small ribosomal subunit (mt-SSU). Mature mammalian 55S mitochondrial ribosomes consist of a small (28S) and a large (39S) subunit. The 28S small subunit contains a 12S ribosomal RNA (12S mt-rRNA) and 30 different proteins. The 39S large subunit contains a 16S rRNA (16S mt-rRNA), a copy of mitochondrial valine transfer RNA (mt-tRNA(Val)), which plays an integral structural role, and 52 different proteins. Interacts with DELE1. Interacts with NOA1. As to expression, ubiquitous.

It is found in the mitochondrion. The enzyme catalyses GTP + H2O = GDP + phosphate + H(+). As a component of the mitochondrial small ribosomal subunit, it plays a role in the translation of mitochondrial mRNAs. Involved in mediating interferon-gamma-induced cell death. Displays GTPase activity in vitro. In Homo sapiens (Human), this protein is Small ribosomal subunit protein mS29.